The sequence spans 209 residues: Kynurenine formamidase (209 aa).

Tryptophan 20 contributes to the substrate binding site. Residues histidine 50, histidine 54, and aspartate 56 each coordinate Zn(2+). The active-site Proton donor/acceptor is histidine 60. Zn(2+)-binding residues include histidine 161 and glutamate 173.

Belongs to the Cyclase 1 superfamily. KynB family. As to quaternary structure, homodimer. The cofactor is Zn(2+).

The catalysed reaction is N-formyl-L-kynurenine + H2O = L-kynurenine + formate + H(+). The protein operates within amino-acid degradation; L-tryptophan degradation via kynurenine pathway; L-kynurenine from L-tryptophan: step 2/2. Catalyzes the hydrolysis of N-formyl-L-kynurenine to L-kynurenine, the second step in the kynurenine pathway of tryptophan degradation. This chain is Kynurenine formamidase, found in Bacillus cytotoxicus (strain DSM 22905 / CIP 110041 / 391-98 / NVH 391-98).